The sequence spans 243 residues: CAVP-target protein (243 aa).

The segment at 1-22 is disordered; the sequence is PKPPAEAKPAAKPAAPPAAANP. A compositionally biased stretch (low complexity) spans 7–20; the sequence is AKPAAKPAAPPAAA. Positions 35-62 constitute an IQ domain; it reads SAATRIQASFRMHKNRMALKEKSIPKFS. Ig-like C2-type domains are found at residues 59–150 and 151–243; these read PKFS…LALE and VPAK…VKVN.

This protein is the target of CAVP, which binds to it in a calcium-dependent manner. This is CAVP-target protein from Branchiostoma lanceolatum (Common lancelet).